Here is a 270-residue protein sequence, read N- to C-terminus: Pancreas transcription factor 1 subunit alpha (270 aa).

Residues 119–171 (QLRQAANVRERRRMQSINDAFEGLRSHIPTLPYEKRLSKVDTLRLAIGYINFL) enclose the bHLH domain.

It is found in the nucleus. Functionally, transcription factor implicated in the cell fate determination in various organs. Binds to the E-box consensus sequence 5'-CANNTG-3'. Acts together with pdx1 to induce the pancreatic lineage within the endoderm. Plays a central role in directing the differentiation of retinal progenitors towards horizontal and amacrine fates. The sequence is that of Pancreas transcription factor 1 subunit alpha (ptf1a) from Xenopus laevis (African clawed frog).